The sequence spans 930 residues: Isoleucine--tRNA ligase (930 aa).

Positions 57 to 67 (PYANGNIHVGH) match the 'HIGH' region motif. Residue Glu554 participates in L-isoleucyl-5'-AMP binding. Residues 595–599 (KMSKS) carry the 'KMSKS' region motif. Lys598 serves as a coordination point for ATP. Residues Cys888, Cys891, Cys908, and Cys911 each contribute to the Zn(2+) site.

This sequence belongs to the class-I aminoacyl-tRNA synthetase family. IleS type 1 subfamily. Monomer. Zn(2+) is required as a cofactor.

It localises to the cytoplasm. The enzyme catalyses tRNA(Ile) + L-isoleucine + ATP = L-isoleucyl-tRNA(Ile) + AMP + diphosphate. Its function is as follows. Catalyzes the attachment of isoleucine to tRNA(Ile). As IleRS can inadvertently accommodate and process structurally similar amino acids such as valine, to avoid such errors it has two additional distinct tRNA(Ile)-dependent editing activities. One activity is designated as 'pretransfer' editing and involves the hydrolysis of activated Val-AMP. The other activity is designated 'posttransfer' editing and involves deacylation of mischarged Val-tRNA(Ile). The protein is Isoleucine--tRNA ligase of Streptococcus pneumoniae (strain Hungary19A-6).